The primary structure comprises 207 residues: 3-demethoxyubiquinol 3-hydroxylase (207 aa).

A compositionally biased stretch (basic and acidic residues) spans 22 to 32; that stretch reads ERANPADRLAP. Positions 22 to 41 are disordered; it reads ERANPADRLAPETEQMNPEE. Fe cation is bound by residues Glu-56, Glu-86, His-89, Glu-138, Glu-170, and His-173.

It belongs to the COQ7 family. Fe cation is required as a cofactor.

Its subcellular location is the cell membrane. It carries out the reaction a 5-methoxy-2-methyl-3-(all-trans-polyprenyl)benzene-1,4-diol + AH2 + O2 = a 3-demethylubiquinol + A + H2O. The protein operates within cofactor biosynthesis; ubiquinone biosynthesis. Catalyzes the hydroxylation of 2-nonaprenyl-3-methyl-6-methoxy-1,4-benzoquinol during ubiquinone biosynthesis. The chain is 3-demethoxyubiquinol 3-hydroxylase from Cupriavidus metallidurans (strain ATCC 43123 / DSM 2839 / NBRC 102507 / CH34) (Ralstonia metallidurans).